Here is a 63-residue protein sequence, read N- to C-terminus: Metallothionein-2 (63 aa).

Positions Met-1–Cys-30 are beta. A divalent metal cation-binding residues include Cys-6, Cys-8, Cys-14, Cys-16, Cys-20, Cys-22, Cys-25, Cys-27, Cys-30, Cys-34, Cys-35, Cys-37, Cys-38, Cys-42, Cys-45, Cys-49, Cys-51, Cys-59, Cys-61, and Cys-62. The tract at residues Arg-31–His-63 is alpha.

The protein belongs to the metallothionein superfamily. Type 1 family.

In terms of biological role, metallothioneins have a high content of cysteine residues that bind various heavy metals. This Columba livia (Rock dove) protein is Metallothionein-2.